The following is a 663-amino-acid chain: Probable potassium transport system protein Kup (663 aa).

The interval Met1–Ala23 is disordered. 12 helical membrane passes run Pro81–Phe101, Leu137–Pro157, Pro173–Ile193, Val201–Val221, Ile224–Ala244, Trp248–Tyr268, Trp283–Leu303, Leu315–Val335, Ile373–Phe393, Leu399–His419, Ala433–Val453, and Val455–Thr475.

The protein belongs to the HAK/KUP transporter (TC 2.A.72) family.

The protein resides in the cell inner membrane. The enzyme catalyses K(+)(in) + H(+)(in) = K(+)(out) + H(+)(out). In terms of biological role, transport of potassium into the cell. Likely operates as a K(+):H(+) symporter. In Anaeromyxobacter sp. (strain Fw109-5), this protein is Probable potassium transport system protein Kup.